We begin with the raw amino-acid sequence, 324 residues long: Ribose-phosphate pyrophosphokinase (324 aa).

Residues 45–47 and 104–105 each bind ATP; these read NGE and RQ. Residues His-138 and Asp-178 each coordinate Mg(2+). Residue Lys-201 is part of the active site. Residues Arg-203, Asp-229, and 233–237 contribute to the D-ribose 5-phosphate site; that span reads DTGGT.

The protein belongs to the ribose-phosphate pyrophosphokinase family. Class I subfamily. As to quaternary structure, homohexamer. It depends on Mg(2+) as a cofactor.

Its subcellular location is the cytoplasm. The catalysed reaction is D-ribose 5-phosphate + ATP = 5-phospho-alpha-D-ribose 1-diphosphate + AMP + H(+). Its pathway is metabolic intermediate biosynthesis; 5-phospho-alpha-D-ribose 1-diphosphate biosynthesis; 5-phospho-alpha-D-ribose 1-diphosphate from D-ribose 5-phosphate (route I): step 1/1. Its function is as follows. Involved in the biosynthesis of the central metabolite phospho-alpha-D-ribosyl-1-pyrophosphate (PRPP) via the transfer of pyrophosphoryl group from ATP to 1-hydroxyl of ribose-5-phosphate (Rib-5-P). The chain is Ribose-phosphate pyrophosphokinase from Streptomyces avermitilis (strain ATCC 31267 / DSM 46492 / JCM 5070 / NBRC 14893 / NCIMB 12804 / NRRL 8165 / MA-4680).